Here is a 145-residue protein sequence, read N- to C-terminus: D-aminoacyl-tRNA deacylase (145 aa).

The short motif at 137–138 is the Gly-cisPro motif, important for rejection of L-amino acids element; that stretch reads GP.

This sequence belongs to the DTD family. Homodimer.

Its subcellular location is the cytoplasm. It carries out the reaction glycyl-tRNA(Ala) + H2O = tRNA(Ala) + glycine + H(+). It catalyses the reaction a D-aminoacyl-tRNA + H2O = a tRNA + a D-alpha-amino acid + H(+). An aminoacyl-tRNA editing enzyme that deacylates mischarged D-aminoacyl-tRNAs. Also deacylates mischarged glycyl-tRNA(Ala), protecting cells against glycine mischarging by AlaRS. Acts via tRNA-based rather than protein-based catalysis; rejects L-amino acids rather than detecting D-amino acids in the active site. By recycling D-aminoacyl-tRNA to D-amino acids and free tRNA molecules, this enzyme counteracts the toxicity associated with the formation of D-aminoacyl-tRNA entities in vivo and helps enforce protein L-homochirality. The chain is D-aminoacyl-tRNA deacylase from Shigella dysenteriae serotype 1 (strain Sd197).